Here is a 563-residue protein sequence, read N- to C-terminus: Ribulokinase (563 aa).

This sequence belongs to the ribulokinase family.

The catalysed reaction is D-ribulose + ATP = D-ribulose 5-phosphate + ADP + H(+). The enzyme catalyses L-ribulose + ATP = L-ribulose 5-phosphate + ADP + H(+). The protein operates within carbohydrate degradation; L-arabinose degradation via L-ribulose; D-xylulose 5-phosphate from L-arabinose (bacterial route): step 2/3. The chain is Ribulokinase from Halalkalibacterium halodurans (strain ATCC BAA-125 / DSM 18197 / FERM 7344 / JCM 9153 / C-125) (Bacillus halodurans).